The primary structure comprises 616 residues: FNIP repeat-containing protein DDB_G0290639 (616 aa).

The stretch at 239-274 (FENNNNNNNNNNNNNNNNNNNNNNNNNNNNNKKTEK) forms a coiled coil. Residues 241–269 (NNNNNNNNNNNNNNNNNNNNNNNNNNNNN) are compositionally biased toward low complexity. The interval 241–270 (NNNNNNNNNNNNNNNNNNNNNNNNNNNNNK) is disordered. FNIP repeat units lie at residues 337–379 (FEES…FNDG), 380–421 (FNQS…KLCN), 423–464 (FSQP…VFYD), 466–508 (FNQL…FSDG), 509–550 (FNQT…LIDS), and 552–593 (FQQP…ILDK).

This chain is FNIP repeat-containing protein DDB_G0290639, found in Dictyostelium discoideum (Social amoeba).